Here is a 211-residue protein sequence, read N- to C-terminus: MTTLTRQDLNFGQVVADILCEFLEVAVHLILYVREVYPIGIFQKRKKYNVPVQMSCHPELNRYIQDTLHCVKPLIEKNDVEKVVVVILDKEHHPVERFVFEIAQPPLLSISSDSLLSHVEQLLRAFILKISVCDAVLDNNPPGCTFTLLVHTREAATRNMEKIQVIKDFPWILADEQDVHMQEPRLIPLKTMTSDILKMQLYVEERAQKST.

The region spanning 13 to 203 (QVVADILCEF…SDILKMQLYV (191 aa)) is the HORMA domain.

In terms of assembly, homooligomer. Interacts with rev1. Interacts with rev3l. Interacts with fzr1 (in complex with the anaphase promoting complex APC). May interact with cdc20.

It localises to the nucleus. The protein localises to the cytoplasm. The protein resides in the cytoskeleton. It is found in the spindle. Functionally, adapter protein able to interact with different proteins and involved in different biological processes. Mediates the interaction between the error-prone DNA polymerase zeta catalytic subunit rev3l and the inserter polymerase rev1, thereby mediating the second polymerase switching in translesion DNA synthesis. Translesion DNA synthesis releases the replication blockade of replicative polymerases, stalled in presence of DNA lesions. May also play a role in signal transduction in response to DNA damage. May regulate the activation of the anaphase promoting complex APC thereby regulating progression through the cell cycle. Through transcriptional regulation may play a role in epithelial-mesenchymal transdifferentiation. This chain is Mitotic spindle assembly checkpoint protein MAD2B (mad2l2), found in Xenopus tropicalis (Western clawed frog).